The primary structure comprises 433 residues: MKFVDSADLIIKAGKGGDGAVSFLHALFVPNGGPNGGDGGDGGSVYFQGDEGKHSLLDLKLQKKYSAQDGFKGDIKNMHGAKGEDKIIKVPVGTILYDKKTNNILADINENNKLVLIAKGGKGGKGNARFANSRNKAPTIFEAGELGQEFEIRAELKVLADVGFVGLPNAGKSTLLRAISNSKPVVADYPFTTITPQLGVARTKNNDTFIVADLPGLIQGASLGKGLGHQFLKHIERCLVICHIIDASGNFGSEDIIKNYELIRNELKTYNLNLEKRAEIIVLNKMDLDEAQLNLLDEKIINYFKNKKVIQISGLKKENIDQLLFMIYEELKVAKKQSLWELDKNNNQDEMVIYKFEEQKEDIQAYNKGNNRWEIAGETIFKIYQKFPIWTEDNLLMFNEKLKETGVYETLVKKGIKKGDFVKVFDYELEWTD.

The Obg domain maps to methionine 1–leucine 159. The region spanning alanine 160 to lysine 332 is the OBG-type G domain. Residues glycine 166–serine 173, phenylalanine 191–threonine 195, aspartate 213–glycine 216, asparagine 284–aspartate 287, and serine 313–leucine 315 contribute to the GTP site. Residues serine 173 and threonine 193 each coordinate Mg(2+). In terms of domain architecture, OCT spans lysine 355–aspartate 433.

This sequence belongs to the TRAFAC class OBG-HflX-like GTPase superfamily. OBG GTPase family. Monomer. Mg(2+) serves as cofactor.

The protein resides in the cytoplasm. An essential GTPase which binds GTP, GDP and possibly (p)ppGpp with moderate affinity, with high nucleotide exchange rates and a fairly low GTP hydrolysis rate. Plays a role in control of the cell cycle, stress response, ribosome biogenesis and in those bacteria that undergo differentiation, in morphogenesis control. The protein is GTPase Obg of Mycoplasma mycoides subsp. mycoides SC (strain CCUG 32753 / NCTC 10114 / PG1).